Here is a 139-residue protein sequence, read N- to C-terminus: Acidic phospholipase A2 DE-I (139 aa).

A signal peptide spans 1 to 16; sequence MRTLWIMAVLLLGVEG. Intrachain disulfides connect Cys-42–Cys-132, Cys-44–Cys-60, Cys-59–Cys-111, Cys-65–Cys-139, Cys-66–Cys-104, Cys-73–Cys-97, and Cys-91–Cys-102. The Ca(2+) site is built by Tyr-43, Gly-45, and Gly-47. His-63 is an active-site residue. Residue Asp-64 participates in Ca(2+) binding. Residue Asp-105 is part of the active site.

It depends on Ca(2+) as a cofactor. As to expression, expressed by the venom gland.

Its subcellular location is the secreted. It catalyses the reaction a 1,2-diacyl-sn-glycero-3-phosphocholine + H2O = a 1-acyl-sn-glycero-3-phosphocholine + a fatty acid + H(+). Functionally, snake venom phospholipase A2 (PLA2) that inhibits the ADP- and collagen-induced human platelet aggregation. Exhibits high hydrolytic activities and preferred the anionic micelles to the zwitterionic micelles. PLA2 catalyzes the calcium-dependent hydrolysis of the 2-acyl groups in 3-sn-phosphoglycerides. The sequence is that of Acidic phospholipase A2 DE-I from Ovophis okinavensis (Ryukyu Island pit viper).